A 417-amino-acid polypeptide reads, in one-letter code: NADH-quinone oxidoreductase subunit D (417 aa).

It belongs to the complex I 49 kDa subunit family. In terms of assembly, NDH-1 is composed of 14 different subunits. Subunits NuoB, C, D, E, F, and G constitute the peripheral sector of the complex.

The protein localises to the cell inner membrane. The catalysed reaction is a quinone + NADH + 5 H(+)(in) = a quinol + NAD(+) + 4 H(+)(out). NDH-1 shuttles electrons from NADH, via FMN and iron-sulfur (Fe-S) centers, to quinones in the respiratory chain. The immediate electron acceptor for the enzyme in this species is believed to be ubiquinone. Couples the redox reaction to proton translocation (for every two electrons transferred, four hydrogen ions are translocated across the cytoplasmic membrane), and thus conserves the redox energy in a proton gradient. The chain is NADH-quinone oxidoreductase subunit D from Ralstonia pickettii (strain 12J).